Consider the following 610-residue polypeptide: Zinc metalloproteinase-disintegrin-like BITM06A (610 aa).

Positions 1–20 (MIQVLLVTICLAAFPYQGSS) are cleaved as a signal peptide. Positions 21 to 189 (IILESGNVND…KKASQLVVTA (169 aa)) are excised as a propeptide. Residues 198 to 394 (RYVELFIVVD…ENPQCILNEP (197 aa)) enclose the Peptidase M12B domain. Glu201 and Asp285 together coordinate Ca(2+). 3 disulfide bridges follow: Cys309–Cys389, Cys349–Cys373, and Cys351–Cys356. Zn(2+) is bound at residue His334. Glu335 is a catalytic residue. Zn(2+) contacts are provided by His338 and His344. N-linked (GlcNAc...) asparagine glycosylation occurs at Asn372. 8 residues coordinate Ca(2+): Cys389, Asn392, Val404, Asn407, Leu409, Glu411, Glu414, and Asp417. The 87-residue stretch at 402–488 (PPVCGNELLE…ECPADVFHKN (87 aa)) folds into the Disintegrin domain. Disulfide bonds link Cys405-Cys434, Cys416-Cys429, Cys418-Cys424, Cys428-Cys451, Cys442-Cys448, Cys447-Cys473, Cys460-Cys480, Cys467-Cys499, Cys492-Cys504, Cys511-Cys561, Cys526-Cys572, Cys539-Cys549, Cys556-Cys598, and Cys592-Cys603. The D/ECD-tripeptide signature appears at 466 to 468 (ECD). Asp468, Pro469, Glu471, Asp483, and Val484 together coordinate Ca(2+).

It belongs to the venom metalloproteinase (M12B) family. P-III subfamily. P-IIIa sub-subfamily. In terms of assembly, monomer. Zn(2+) serves as cofactor. As to expression, expressed by the venom gland.

It localises to the secreted. Its function is as follows. Snake venom metalloproteinase that impairs hemostasis in the envenomed animal. The polypeptide is Zinc metalloproteinase-disintegrin-like BITM06A (Bothrops insularis (Golden lancehead)).